We begin with the raw amino-acid sequence, 627 residues long: Glucokinase regulatory protein (627 aa).

SIS domains are found at residues 90 to 286 and 320 to 499; these read VQEV…QGVV and VGIS…LLGK. Residues 109–110, Glu-153, and 179–181 each bind beta-D-fructose 1-phosphate; these read TS and SVG. 109–110 contacts beta-D-fructose 6-phosphate; it reads TS. Position 179–181 (179–181) interacts with beta-D-fructose 6-phosphate; it reads SVG. Residues 199 to 200 form an important for interaction with GCK region; that stretch reads AV. Residue Glu-348 participates in beta-D-fructose 1-phosphate binding. An essential for interaction with GCK region spans residues 463–465; that stretch reads LLF. Lys-514 is a beta-D-fructose 1-phosphate binding site. Lys-514 is a binding site for beta-D-fructose 6-phosphate.

Belongs to the GCKR family. Interacts (fructose 6-phosphate bound form) with GCK. Detected in liver (at protein level). Not detected in muscle, brain, heart, testis, intestine or spleen.

It is found in the cytoplasm. It localises to the nucleus. Its subcellular location is the mitochondrion. Functionally, regulates glucokinase (GCK) by forming an inactive complex with this enzyme. Acts by promoting GCK recruitment to the nucleus, possibly to provide a reserve of GCK that can be quickly released in the cytoplasm after a meal. The affinity of GCKR for GCK is modulated by fructose metabolites: GCKR with bound fructose 6-phosphate has increased affinity for GCK, while GCKR with bound fructose 1-phosphate has strongly decreased affinity for GCK and does not inhibit GCK activity. This Rattus norvegicus (Rat) protein is Glucokinase regulatory protein.